The chain runs to 227 residues: ATP synthase subunit a (227 aa).

Transmembrane regions (helical) follow at residues 16-36 (AFVY…VAYI), 79-99 (LVAT…IPGF), 105-125 (SLNL…FEGI), 176-196 (LFLL…AFAL), and 202-222 (VLQT…AVAI).

It belongs to the ATPase A chain family. In terms of assembly, F-type ATPases have 2 components, CF(1) - the catalytic core - and CF(0) - the membrane proton channel. CF(1) has five subunits: alpha(3), beta(3), gamma(1), delta(1), epsilon(1). CF(0) has three main subunits: a(1), b(2) and c(9-12). The alpha and beta chains form an alternating ring which encloses part of the gamma chain. CF(1) is attached to CF(0) by a central stalk formed by the gamma and epsilon chains, while a peripheral stalk is formed by the delta and b chains.

The protein localises to the cell inner membrane. Key component of the proton channel; it plays a direct role in the translocation of protons across the membrane. This Campylobacter concisus (strain 13826) protein is ATP synthase subunit a.